A 399-amino-acid chain; its full sequence is Putative cytochrome P450 133B2 (399 aa).

Heme is bound at residue cysteine 348.

It belongs to the cytochrome P450 family. It depends on heme as a cofactor.

This is Putative cytochrome P450 133B2 (cyp133B2) from Xylella fastidiosa (strain Temecula1 / ATCC 700964).